The sequence spans 788 residues: Protocadherin beta-18 (788 aa).

A signal peptide spans 1–28; the sequence is MEPGKGRAQPTRQVLLFFVFLGGSLVYS. Cadherin domains lie at 29–133, 134–242, 243–347, 348–452, and 453–562; these read ETWS…TPTF, LNNH…APEF, EKPV…PPEI, AMTS…APAF, and TQTS…SPFV. The Extracellular portion of the chain corresponds to 29–691; that stretch reads ETWSYSIAEE…AQADSLTVYL (663 aa). The N-linked (GlcNAc...) asparagine glycan is linked to Asn169. 2 N-linked (GlcNAc...) asparagine glycosylation sites follow: Asn419 and Asn437. N-linked (GlcNAc...) asparagine glycosylation is present at Asn568. Positions 569 to 672 constitute a Cadherin 6 domain; it reads GSAPCTELVP…LVDGFSQPYL (104 aa). Residues 692 to 712 form a helical membrane-spanning segment; sequence VVALASVSSLFLFSVFLFVAV. The Cytoplasmic portion of the chain corresponds to 713–788; the sequence is RLCRRSRAAS…DSDMEKAPPF (76 aa).

The protein resides in the cell membrane. Functionally, potential calcium-dependent cell-adhesion protein. The sequence is that of Protocadherin beta-18 (PCDHB18) from Pan troglodytes (Chimpanzee).